The chain runs to 212 residues: Ribonuclease HII (212 aa).

The 189-residue stretch at 24 to 212 (QLVAGVDEVG…PVKKALGIEE (189 aa)) folds into the RNase H type-2 domain. A divalent metal cation contacts are provided by aspartate 30, glutamate 31, and aspartate 122.

This sequence belongs to the RNase HII family. It depends on Mn(2+) as a cofactor. Mg(2+) is required as a cofactor.

It is found in the cytoplasm. It carries out the reaction Endonucleolytic cleavage to 5'-phosphomonoester.. Endonuclease that specifically degrades the RNA of RNA-DNA hybrids. This chain is Ribonuclease HII, found in Vibrio campbellii (strain ATCC BAA-1116).